A 620-amino-acid polypeptide reads, in one-letter code: Cell fusion protein cfr1 (620 aa).

Residues 79 to 169 form the Fibronectin type-III domain; it reads LPSPPVLKLK…KHITIKTLRM (91 aa). The BRCT domain maps to 167–256; that stretch reads LRMIDLTGIQ…RLVNVSGFYI (90 aa). 2 disordered regions span residues 287-566 and 588-620; these read QPKN…PEKA and KQSS…VNID. Over residues 303 to 314 the composition is skewed to polar residues; it reads APQQTTQQGTQN. Over residues 315–330 the composition is skewed to low complexity; the sequence is SANAEPSSSASVPAEA. Over residues 352-375 the composition is skewed to polar residues; sequence SKPNEAPTSSENIKADQPENSTKQ. Residues 382-392 are compositionally biased toward basic and acidic residues; that stretch reads MQIKDAEEHSN. Over residues 393 to 406 the composition is skewed to polar residues; the sequence is LESTPAAQQTSEVE. A compositionally biased stretch (low complexity) spans 424–434; sequence NVNEENNTPET. The span at 445-468 shows a compositional bias: polar residues; that stretch reads NTAAESLINQEETTSGEAVTKSTV. Acidic residues predominate over residues 472 to 484; that stretch reads ANEEEAEPNEIIE. A compositionally biased stretch (polar residues) spans 506 to 515; it reads NNANSENANG. The segment covering 517-537 has biased composition (basic and acidic residues); sequence TDEKIIEAPLDTKENSDDDKP.

It belongs to the CHS5 family.

It is found in the golgi apparatus. Required for cell fusion, independently of fus1. Appears to have a role in transporting proteins that are involved in mating. May act as a scaffold to retain cell fusion proteins in the cisternae of the Golgi. Degraded at the onset of mating and this leads to release of cell fusion proteins. The chain is Cell fusion protein cfr1 (cfr1) from Schizosaccharomyces pombe (strain 972 / ATCC 24843) (Fission yeast).